The primary structure comprises 664 residues: Intraflagellar transport protein 70B (664 aa).

7 TPR repeats span residues 11 to 44, 45 to 78, 153 to 186, 188 to 220, 385 to 418, 423 to 456, and 458 to 491; these read DGEF…SPRS, RAGL…HPEL, YDGQ…SGYQ, DISY…GIRQ, LTEQ…YDET, IPVL…CNDH, and VWKL…NYDN. Positions 507–534 form a coiled coil; that stretch reads YIMTSQNEEAEELMRKIEKEEEQLSYDD. A TPR 8 repeat occupies 543–576; sequence CIVNLVIGTLYCAKGNYDFGISRVIKSLEPYHKK.

This sequence belongs to the TTC30/dfy-1/fleer family. As to quaternary structure, interacts with the IFT B complex components IFT27, IFT46, IFT74, IFT52, IFT57, IFT80, IFT81 and IFT88. Interacts with KIF17.

It localises to the cell projection. Its subcellular location is the cilium. Its function is as follows. Required for polyglutamylation of axonemal tubulin. Plays a role in anterograde intraflagellar transport (IFT), the process by which cilia precursors are transported from the base of the cilium to the site of their incorporation at the tip. The protein is Intraflagellar transport protein 70B (Ift70b) of Rattus norvegicus (Rat).